The following is a 235-amino-acid chain: Phosphoribosylaminoimidazole-succinocarboxamide synthase (235 aa).

It belongs to the SAICAR synthetase family.

The catalysed reaction is 5-amino-1-(5-phospho-D-ribosyl)imidazole-4-carboxylate + L-aspartate + ATP = (2S)-2-[5-amino-1-(5-phospho-beta-D-ribosyl)imidazole-4-carboxamido]succinate + ADP + phosphate + 2 H(+). Its pathway is purine metabolism; IMP biosynthesis via de novo pathway; 5-amino-1-(5-phospho-D-ribosyl)imidazole-4-carboxamide from 5-amino-1-(5-phospho-D-ribosyl)imidazole-4-carboxylate: step 1/2. The protein is Phosphoribosylaminoimidazole-succinocarboxamide synthase of Thermoanaerobacter pseudethanolicus (strain ATCC 33223 / 39E) (Clostridium thermohydrosulfuricum).